The primary structure comprises 217 residues: Small ribosomal subunit protein uS3c (217 aa).

Residues 43 to 117 enclose the KH type-2 domain; that stretch reads IKNYVQKNKR…KLNIAITRIA (75 aa).

This sequence belongs to the universal ribosomal protein uS3 family. In terms of assembly, part of the 30S ribosomal subunit.

It is found in the plastid. The protein resides in the chloroplast. This chain is Small ribosomal subunit protein uS3c (rps3), found in Platanus occidentalis (Sycamore).